The sequence spans 192 residues: Ion-translocating oxidoreductase complex subunit A (192 aa).

6 helical membrane-spanning segments follow: residues 5–25 (ILLL…FLGL), 39–59 (IGMG…AYLV), 72–92 (LRTM…EMVV), 102–122 (LLGI…VALL), 134–154 (IIYG…FASM), and 171–191 (SIAM…TGLV).

Belongs to the NqrDE/RnfAE family. In terms of assembly, the complex is composed of six subunits: RnfA, RnfB, RnfC, RnfD, RnfE and RnfG.

The protein localises to the cell inner membrane. Part of a membrane-bound complex that couples electron transfer with translocation of ions across the membrane. The protein is Ion-translocating oxidoreductase complex subunit A of Vibrio vulnificus (strain CMCP6).